A 905-amino-acid polypeptide reads, in one-letter code: DNA gyrase subunit A (905 aa).

The Topo IIA-type catalytic domain occupies 35-524 (IPDVRDGLKP…GEFDQDIEDL (490 aa)). Residue Y123 is the O-(5'-phospho-DNA)-tyrosine intermediate of the active site. The GyrA-box signature appears at 551–557 (QKRGGKG). Residues 885–905 (TAESEEDSELEEEGLEQSEEV) form a disordered region. The segment covering 886–905 (AESEEDSELEEEGLEQSEEV) has biased composition (acidic residues).

The protein belongs to the type II topoisomerase GyrA/ParC subunit family. As to quaternary structure, heterotetramer, composed of two GyrA and two GyrB chains. In the heterotetramer, GyrA contains the active site tyrosine that forms a transient covalent intermediate with DNA, while GyrB binds cofactors and catalyzes ATP hydrolysis.

It localises to the cytoplasm. It catalyses the reaction ATP-dependent breakage, passage and rejoining of double-stranded DNA.. Functionally, a type II topoisomerase that negatively supercoils closed circular double-stranded (ds) DNA in an ATP-dependent manner to modulate DNA topology and maintain chromosomes in an underwound state. Negative supercoiling favors strand separation, and DNA replication, transcription, recombination and repair, all of which involve strand separation. Also able to catalyze the interconversion of other topological isomers of dsDNA rings, including catenanes and knotted rings. Type II topoisomerases break and join 2 DNA strands simultaneously in an ATP-dependent manner. This chain is DNA gyrase subunit A, found in Rickettsia conorii (strain ATCC VR-613 / Malish 7).